The following is a 256-amino-acid chain: 3-deoxy-manno-octulosonate cytidylyltransferase (256 aa).

This sequence belongs to the KdsB family.

The protein resides in the cytoplasm. It carries out the reaction 3-deoxy-alpha-D-manno-oct-2-ulosonate + CTP = CMP-3-deoxy-beta-D-manno-octulosonate + diphosphate. It participates in nucleotide-sugar biosynthesis; CMP-3-deoxy-D-manno-octulosonate biosynthesis; CMP-3-deoxy-D-manno-octulosonate from 3-deoxy-D-manno-octulosonate and CTP: step 1/1. It functions in the pathway bacterial outer membrane biogenesis; lipopolysaccharide biosynthesis. In terms of biological role, activates KDO (a required 8-carbon sugar) for incorporation into bacterial lipopolysaccharide in Gram-negative bacteria. The protein is 3-deoxy-manno-octulosonate cytidylyltransferase of Histophilus somni (strain 2336) (Haemophilus somnus).